We begin with the raw amino-acid sequence, 451 residues long: Trigger factor (451 aa).

One can recognise a PPIase FKBP-type domain in the interval Asp165–Leu250.

This sequence belongs to the FKBP-type PPIase family. Tig subfamily.

It is found in the cytoplasm. It catalyses the reaction [protein]-peptidylproline (omega=180) = [protein]-peptidylproline (omega=0). Its function is as follows. Involved in protein export. Acts as a chaperone by maintaining the newly synthesized protein in an open conformation. Functions as a peptidyl-prolyl cis-trans isomerase. This chain is Trigger factor (tig), found in Helicobacter pylori (strain J99 / ATCC 700824) (Campylobacter pylori J99).